A 210-amino-acid polypeptide reads, in one-letter code: Guanylate kinase (210 aa).

Positions 5–184 constitute a Guanylate kinase-like domain; that stretch reads GLLIVFSGPS…AAERVKHIIE (180 aa). 12-19 provides a ligand contact to ATP; the sequence is GPSGVGKG.

Belongs to the guanylate kinase family.

It localises to the cytoplasm. The enzyme catalyses GMP + ATP = GDP + ADP. Its function is as follows. Essential for recycling GMP and indirectly, cGMP. This Streptococcus mutans serotype c (strain ATCC 700610 / UA159) protein is Guanylate kinase.